Consider the following 201-residue polypeptide: Kinetochore protein SPC24 homolog (201 aa).

Positions 78-133 (DIAAEDEIERLQKELDEEMEREFKLKDELRLVADELKDLNAQLSSIDEHKQSTKRK) form a coiled coil.

The protein belongs to the SPC24 family. In terms of assembly, component of the NDC80 complex, which consists of NDC80, NUF2, SPC24 and SPC25. As to expression, highly expressed in actively dividing tissues, such as shoot apical meristem (SAM), root apical meristem (RAM), vasculature, newly emerging leaves and inflorescence shoots.

The protein resides in the chromosome. It is found in the centromere. Acts as a component of the essential kinetochore-associated NDC80 complex, which is required for chromosome segregation and spindle checkpoint activity to ensure proper cell division. Required for the maintenance of plant architecture. This chain is Kinetochore protein SPC24 homolog, found in Arabidopsis thaliana (Mouse-ear cress).